Consider the following 158-residue polypeptide: Transcription factor BTF3 homolog 4 (158 aa).

Residues 33–98 (TADDKKLQSS…AETKQLTEML (66 aa)) enclose the NAC-A/B domain. Residues 125-158 (LDNKAPKAEDIDEEDDDVPDLVENFDEASKNEAN) form a disordered region. Over residues 134–150 (DIDEEDDDVPDLVENFD) the composition is skewed to acidic residues.

It belongs to the NAC-beta family.

The polypeptide is Transcription factor BTF3 homolog 4 (btf3l4) (Danio rerio (Zebrafish)).